Consider the following 175-residue polypeptide: Transcription factor E (175 aa).

Residues 3–88 (ENPLIQQVLF…TWKPSLEKVP (86 aa)) form the HTH TFE/IIEalpha-type domain.

It belongs to the TFE family. Monomer. Interaction with RNA polymerase subunits RpoF and RpoE is necessary for Tfe stimulatory transcription activity. Able to interact with Tbp and RNA polymerase in the absence of DNA promoter. Interacts both with the preinitiation and elongation complexes.

Its function is as follows. Transcription factor that plays a role in the activation of archaeal genes transcribed by RNA polymerase. Facilitates transcription initiation by enhancing TATA-box recognition by TATA-box-binding protein (Tbp), and transcription factor B (Tfb) and RNA polymerase recruitment. Not absolutely required for transcription in vitro, but particularly important in cases where Tbp or Tfb function is not optimal. It dynamically alters the nucleic acid-binding properties of RNA polymerases by stabilizing the initiation complex and destabilizing elongation complexes. Seems to translocate with the RNA polymerase following initiation and acts by binding to the non template strand of the transcription bubble in elongation complexes. The sequence is that of Transcription factor E from Methanococcus maripaludis (strain DSM 14266 / JCM 13030 / NBRC 101832 / S2 / LL).